Consider the following 384-residue polypeptide: Cysteine protease ATG4B (384 aa).

The active-site Nucleophile is cysteine 74. Active-site residues include aspartate 269 and histidine 271. The LIR motif lies at 379–382; that stretch reads FEIL.

Belongs to the peptidase C54 family.

The protein localises to the cytoplasm. It is found in the cytosol. Its subcellular location is the cytoplasmic vesicle. The protein resides in the autophagosome. It localises to the endoplasmic reticulum. The protein localises to the mitochondrion. It carries out the reaction [protein]-C-terminal L-amino acid-glycyl-phosphatidylethanolamide + H2O = [protein]-C-terminal L-amino acid-glycine + a 1,2-diacyl-sn-glycero-3-phosphoethanolamine. The enzyme catalyses [protein]-C-terminal L-amino acid-glycyl-phosphatidylserine + H2O = [protein]-C-terminal L-amino acid-glycine + a 1,2-diacyl-sn-glycero-3-phospho-L-serine. Its function is as follows. Cysteine protease that plays a key role in autophagy by mediating both proteolytic activation and delipidation of ATG8 family proteins. Required for canonical autophagy (macroautophagy), non-canonical autophagy as well as for mitophagy. The protease activity is required for proteolytic activation of ATG8 family proteins: cleaves the C-terminal amino acid of ATG8 proteins to reveal a C-terminal glycine. Exposure of the glycine at the C-terminus is essential for ATG8 proteins conjugation to phosphatidylethanolamine (PE) and insertion to membranes, which is necessary for autophagy. Protease activity is also required to counteract formation of high-molecular weight conjugates of ATG8 proteins (ATG8ylation): acts as a deubiquitinating-like enzyme that removes ATG8 conjugated to other proteins, such as ATG3. In addition to the protease activity, also mediates delipidation of ATG8 family proteins. Catalyzes delipidation of PE-conjugated forms of ATG8 proteins during macroautophagy. Also involved in non-canonical autophagy, a parallel pathway involving conjugation of ATG8 proteins to single membranes at endolysosomal compartments, by catalyzing delipidation of ATG8 proteins conjugated to phosphatidylserine (PS). The polypeptide is Cysteine protease ATG4B (Xenopus laevis (African clawed frog)).